Here is a 1259-residue protein sequence, read N- to C-terminus: Trafficking protein particle complex II-specific subunit 130 homolog (1259 aa).

At Ala-2 the chain carries N-acetylalanine. The tract at residues 479 to 526 (GNIPEMFDGRPSFTEGSGLEASPRTPSSLKVQAPPMSRTNSSPGNFES) is disordered.

This sequence belongs to the TMEM1 family. In terms of assembly, part of the multisubunit TRAPP (transport protein particle) II complex composed of BET3, BET5, TRS20, TRS23, TRS31, TRS33, TRS65, TRS85, TRS120 and TRS130.

The protein localises to the golgi apparatus. The protein resides in the trans-Golgi network. It is found in the early endosome. Its function is as follows. Specific subunit of the TRAPP II complex, a highly conserved vesicle tethering complex that is required for the proper transport of proteins in post-Golgi trafficking pathways to the growing cell plate in mitotic active cells. Required for the polarized and selective transport of PIN2, but not PIN1, to the plasma membrane. Not required for ER-to-Golgi as well as biosynthetic and endocytic vacuolar transport. The chain is Trafficking protein particle complex II-specific subunit 130 homolog from Arabidopsis thaliana (Mouse-ear cress).